The following is a 233-amino-acid chain: Probable F-box protein At3g56670 (233 aa).

Residues 22–69 (HGGVIDIPLNTDSGVTKNTPGEIALLRFKSVSKLWSSIISSRRDFIES) enclose the F-box domain.

The polypeptide is Probable F-box protein At3g56670 (Arabidopsis thaliana (Mouse-ear cress)).